The sequence spans 351 residues: Protein-glutamate methylesterase/protein-glutamine glutaminase 2 (351 aa).

The 118-residue stretch at 4-121 folds into the Response regulatory domain; sequence KVLVVDDSAL…PQDFNEYQDL (118 aa). At Asp-55 the chain carries 4-aspartylphosphate. The 193-residue stretch at 156–348 folds into the CheB-type methylesterase domain; the sequence is RVINTQLVAI…DKMLNYLASL (193 aa). Residues Ser-168, His-194, and Asp-290 contribute to the active site.

It belongs to the CheB family. Phosphorylated by CheA. Phosphorylation of the N-terminal regulatory domain activates the methylesterase activity.

The protein resides in the cytoplasm. The catalysed reaction is [protein]-L-glutamate 5-O-methyl ester + H2O = L-glutamyl-[protein] + methanol + H(+). It catalyses the reaction L-glutaminyl-[protein] + H2O = L-glutamyl-[protein] + NH4(+). Its function is as follows. Involved in chemotaxis. Part of a chemotaxis signal transduction system that modulates chemotaxis in response to various stimuli. Catalyzes the demethylation of specific methylglutamate residues introduced into the chemoreceptors (methyl-accepting chemotaxis proteins or MCP) by CheR. Also mediates the irreversible deamidation of specific glutamine residues to glutamic acid. The sequence is that of Protein-glutamate methylesterase/protein-glutamine glutaminase 2 from Shewanella sp. (strain MR-7).